The sequence spans 275 residues: Ribosomal protein L11 methyltransferase (275 aa).

Residues T130, G151, D172, and N213 each coordinate S-adenosyl-L-methionine.

The protein belongs to the methyltransferase superfamily. PrmA family.

The protein resides in the cytoplasm. The enzyme catalyses L-lysyl-[protein] + 3 S-adenosyl-L-methionine = N(6),N(6),N(6)-trimethyl-L-lysyl-[protein] + 3 S-adenosyl-L-homocysteine + 3 H(+). Functionally, methylates ribosomal protein L11. This is Ribosomal protein L11 methyltransferase from Wolinella succinogenes (strain ATCC 29543 / DSM 1740 / CCUG 13145 / JCM 31913 / LMG 7466 / NCTC 11488 / FDC 602W) (Vibrio succinogenes).